We begin with the raw amino-acid sequence, 510 residues long: Ribonuclease Y (510 aa).

Residues 2-22 (IYIIFSSIFAGFILGFLVRVF) form a helical membrane-spanning segment. The region spanning 198–258 (TVASVELPND…IRKELAKRTL (61 aa)) is the KH domain. Residues 324–419 (VLSHSKETAI…VQIADAISAS (96 aa)) enclose the HD domain.

It belongs to the RNase Y family.

It localises to the cell membrane. In terms of biological role, endoribonuclease that initiates mRNA decay. This Borreliella burgdorferi (strain ATCC 35210 / DSM 4680 / CIP 102532 / B31) (Borrelia burgdorferi) protein is Ribonuclease Y.